Reading from the N-terminus, the 266-residue chain is ATP synthase subunit a (266 aa).

Transmembrane regions (helical) follow at residues 28-48, 90-110, 125-145, 158-178, 187-207, 216-236, and 239-259; these read ISFT…AIFM, LIFT…VPLF, VTVT…VGFT, HGTP…SFIL, LFVA…FIVN, AFLA…MIGI, and LEFL…SLYL.

It belongs to the ATPase A chain family. F-type ATPases have 2 components, CF(1) - the catalytic core - and CF(0) - the membrane proton channel. CF(1) has five subunits: alpha(3), beta(3), gamma(1), delta(1), epsilon(1). CF(0) has three main subunits: a(1), b(2) and c(9-12). The alpha and beta chains form an alternating ring which encloses part of the gamma chain. CF(1) is attached to CF(0) by a central stalk formed by the gamma and epsilon chains, while a peripheral stalk is formed by the delta and b chains.

It is found in the cell inner membrane. In terms of biological role, key component of the proton channel; it plays a direct role in the translocation of protons across the membrane. The polypeptide is ATP synthase subunit a (Zymomonas mobilis subsp. mobilis (strain ATCC 31821 / ZM4 / CP4)).